A 100-amino-acid polypeptide reads, in one-letter code: MIPLSHAFSLSIILFILGLIAIIVRRDLLFILLGLEIMINAAASAFVIVGSFLGQSDGQIMYILVITLSASESAVSLALLLQLYRRYHTLHIDNISEMRG.

Transmembrane regions (helical) follow at residues 4–24 (LSHA…AIIV), 29–49 (LFIL…FVIV), and 60–80 (IMYI…LALL).

Belongs to the complex I subunit 4L family. As to quaternary structure, NDH-1 is composed of 13 different subunits. Subunits NuoA, H, J, K, L, M, N constitute the membrane sector of the complex.

The protein resides in the cell inner membrane. The enzyme catalyses a quinone + NADH + 5 H(+)(in) = a quinol + NAD(+) + 4 H(+)(out). Functionally, NDH-1 shuttles electrons from NADH, via FMN and iron-sulfur (Fe-S) centers, to quinones in the respiratory chain. The immediate electron acceptor for the enzyme in this species is believed to be ubiquinone. Couples the redox reaction to proton translocation (for every two electrons transferred, four hydrogen ions are translocated across the cytoplasmic membrane), and thus conserves the redox energy in a proton gradient. The sequence is that of NADH-quinone oxidoreductase subunit K from Blochmanniella pennsylvanica (strain BPEN).